Reading from the N-terminus, the 215-residue chain is MPQTLGFRELGQMAYEPVWQAMQRFTNERGTDAPDEVWLVQHPPVFTQGQAGKAEHLLLPGDIPVVQVDRGGQVTYHGPGQLVAYLLLDVRRLGFGVRDLVNRMEHCLIELLASYGVPAAAKPDAPGVYVNGAKIASLGLRIRHGCSFHGLALNVDMDLQPFRRINPCGYAGLAMTQLSDHAGPIEFAEVSARLRAQLVKHLDYAEQTTLTGGID.

The BPL/LPL catalytic domain occupies Thr31–Glu206. Substrate-binding positions include Arg70–His77, Ser137–Gly139, and Gly150–Ala152. The active-site Acyl-thioester intermediate is the Cys168.

It belongs to the LipB family.

The protein localises to the cytoplasm. It carries out the reaction octanoyl-[ACP] + L-lysyl-[protein] = N(6)-octanoyl-L-lysyl-[protein] + holo-[ACP] + H(+). It participates in protein modification; protein lipoylation via endogenous pathway; protein N(6)-(lipoyl)lysine from octanoyl-[acyl-carrier-protein]: step 1/2. Its function is as follows. Catalyzes the transfer of endogenously produced octanoic acid from octanoyl-acyl-carrier-protein onto the lipoyl domains of lipoate-dependent enzymes. Lipoyl-ACP can also act as a substrate although octanoyl-ACP is likely to be the physiological substrate. In Pseudomonas fluorescens (strain ATCC BAA-477 / NRRL B-23932 / Pf-5), this protein is Octanoyltransferase.